Reading from the N-terminus, the 1745-residue chain is MECCRRAAPGTPLLVLAFLLLSSRTARSEEDREGLWDAWGPWSECSRTCGGGASYSLRRCLSSKSCEGRNIRYRTCSNVDCPPEAGDFRAQQCSAHNDVKYHGQLYEWLPVSNDPDNPCSLKCQAKGTSLVVELAPKVLDGTRCYTESLDMCISGLCQIVGCDHQLGSTVKEDNCGVCNGDGSTCRLVRGQYKSQLSASKSDDTVVAIPYGSRHIRLVLKGPDHLYLETKTLQGTKGENSLSSTGIFLVDNSTVDFQKLPDKEILRMTGPLTADFIIKIHDLGPADSTVQFIFYQPIIHRWRETDFFPCSATCGGGYQLTSAECYDLRSNRVVADQYCHYYPENVKPKPKLQECNLDPCPASDGYKQIMPYDLYHPLPRWEATPWTACSSSCGGGIQSRAVSCVEEDIQGHVTSVEEWKCMYTPKMPVVQPCNIFDCPKWLAQEWSPCTVTCGQGLRYRVVLCIDHRGMHTGGCSAKTKPHIKEECIIPTPCYKPREKLPIEAKLPWFKQAQELEEGAAVSEEPSFIPEAWSACTVTCGVGTQVRIIRCQVLLPFSQSVADLPADECEGPKPASQRACYAGPCNGETPEFNPDNGDGLLGGLQDLDELYDWEYEGFTKCSESCGGGVQEAVVSCLNKQTRELADENLCVTSRRPPQLLKSCNLDPCPASHLLSREMNEVVVLADELCHHPKPSTVQACNRFNCPPAWYPAQWQLCSRTCGGGIQKRDVLCKQRMADGSFLELPETFCSASKPTSHQGCKKDDCPSEWLLSEWSECSVSCGEGTQTRSAICQRVLKTGVSTVVNSTLCPPLPFSSSIRPCMLATCARPGRPSTKHSPHIAAARNIYIQTRRQRKLHFVVGGFAYLLPKTTVVLRCPTRRFRKPLITWEKDGQHSISSAHVTVAPFGYLKIHRLKPSDAGIYTCSAGPAREQFVIKLIGGNRKLVARPLSLWSEEEEALQVRKTNPKEALQTHKHQNGIFSNGSKAEKRGLTADPGNRYDDIVSRLLEQGGWPGELLASWEVQDSAERNASSEEDPNAEQALLHLPFTMVAEQKRLDDILRNLSQQPEELRDLYSKHLVAQLAQDIFRSHLENQDLLPKPSEQRFPPMAVPAHKHVSGFSSSLRSSSGEAGGGSRRPHRKPAILRKISAAQQLSASEVVTHLGQTVALASGTLSVLLHCEAVGNPRPTIHWTRNGEAVQFSDRILLQPDDSLQILAPVEADVGFYTCNATNALGYDSVSIAVTLAGKPLVKTSRMTVLNTEKPTVTVDIGGTVRTVRGVNVTINCQVAGVPEAEVTWFRNKSKLGSSHHLHEGSSHHLHEGSLLLTDVSFSDQGLYSCRAANLHGEQTESTQLLILDPPQVPTQLEDIRALLLATGPNLPSVLMSPLGTQLVLDPGNSALLGCPIKGHPTPNITWFQNGQPIATAPGLTHHIWGAGQILRVANLSGGPQGEFSCLAQNEAGTLLQKASLVIQDYWWSVDRLATCSASCGNRGIHQPRLRCLLNTTEVDPEHCTGKPRPAVQPVACNRRDCPSRWMVTSWSACTRSCGGGVQTRRVTCQKLKASGISTPVSNDMCSQLAKRPVDTQACNQQLCVEWAFSSWGQCNGPCIGPRLAVQHRQVFCQTRDGITLPSEQCSALPRPVSTQNCWSEACSVHWRVSLWTLCTATCGNYGFQSRRVECVHVRTNKAVPEHLCSWGPRPANWQRCNVTPCENTECRDTTRYCEKVRQLKLCQLGQFRSRCCGTCGKA.

Positions 1 to 28 (MECCRRAAPGTPLLVLAFLLLSSRTARS) are cleaved as a signal peptide. Positions 33-82 (EGLWDAWGPWSECSRTCGGGASYSLRRCLSSKSCEGRNIRYRTCSNVDCP) constitute a TSP type-1 1 domain. Intrachain disulfides connect Cys-45–Cys-76, Cys-49–Cys-81, and Cys-60–Cys-66. Asn-251 is a glycosylation site (N-linked (GlcNAc...) asparagine). O-linked (Fuc...) serine glycans are attached at residues Ser-310 and Ser-391. 6 TSP type-1 domains span residues 376–424 (PLPR…MYTP), 436–493 (DCPK…TPCY), 522–584 (EEPS…GPCN), 607–667 (ELYD…DPCP), 703–762 (CPPA…KKDD), and 763–825 (CPSE…ATCA). Thr-451 is a glycosylation site (O-linked (Fuc...) threonine). Cystine bridges form between Cys-534-Cys-578, Cys-538-Cys-583, and Cys-549-Cys-567. 4 disulfide bridges follow: Cys-775/Cys-819, Cys-779/Cys-824, Cys-790/Cys-807, and Cys-874/Cys-922. One can recognise an Ig-like C2-type 1 domain in the interval 836 to 938 (PHIAAARNIY…EQFVIKLIGG (103 aa)). Disordered regions lie at residues 966-991 (EALQ…GLTA) and 1114-1137 (VSGF…RPHR). Residues 1115–1126 (SGFSSSLRSSSG) show a composition bias toward low complexity. Ig-like C2-type domains follow at residues 1139 to 1241 (PAIL…IAVT), 1261 to 1352 (PTVT…TQLL), and 1378 to 1468 (PSVL…ASLV). 3 disulfides stabilise this stretch: Cys-1177-Cys-1225, Cys-1283-Cys-1336, and Cys-1401-Cys-1452. TSP type-1 domains lie at 1528 to 1591 (CPSR…QLCV) and 1649 to 1709 (CSVH…TPCE). Residues 1709 to 1745 (ENTECRDTTRYCEKVRQLKLCQLGQFRSRCCGTCGKA) enclose the PLAC domain.

As to quaternary structure, monomer. Post-translationally, glycosylated. O-fucosylated by POFUT2 on a serine or a threonine residue found within the consensus sequence C1-X(2)-(S/T)-C2-G of the TSP type-1 repeat domains where C1 and C2 are the first and second cysteine residue of the repeat, respectively. Fucosylated repeats can then be further glycosylated by the addition of a beta-1,3-glucose residue by the glucosyltransferase, B3GALTL. Fucosylation mediates the efficient secretion of ADAMTS family members. Can also be C-glycosylated with one or two mannose molecules on tryptophan residues within the consensus sequence W-X-X-W of the TPRs, and N-glycosylated. These other glycosylations can also facilitate secretion. Disulfide bonds are present.

Its subcellular location is the secreted. The protein resides in the extracellular space. The protein localises to the extracellular matrix. The protein is ADAMTS-like protein 1 (Adamtsl1) of Mus musculus (Mouse).